The sequence spans 307 residues: Ubiquinol oxidase subunit 2 (307 aa).

Positions 1–23 are cleaved as a signal peptide; the sequence is MKNKLLARVARLGGLSSALLLAG. C24 carries the N-palmitoyl cysteine lipid modification. The S-diacylglycerol cysteine moiety is linked to residue C24. Helical transmembrane passes span 46 to 66 and 87 to 107; these read STVA…LFAW and IEVT…VITY.

Belongs to the cytochrome c oxidase subunit 2 family. Heterotetramer of the subunits 1, 2, 3 and 4.

The protein localises to the cell membrane. The sequence is that of Ubiquinol oxidase subunit 2 (cyaB) from Acetobacter aceti.